A 285-amino-acid chain; its full sequence is MRFVIVTGMSGAGKSSVLKMLEDSSYFCVDNLPIPFIMKFARLAVKESANITKVALGIDIRSGQALEELGKVLEDVKSAGYQYEILFLEASTEILVKRYKETRRMHPLSGTGRVDKGIELERRKLRFLKERADYIIDTSRLLVRELKTEIDNIFVQDGTYRNFFITVLSFGFKYGLPNDADLVFDVRFLQNPYYVPKLKSKTGNEPEVRDFVLSLEQAEEFLTKLMDMLLFLIPNYIAEGKNQLVIGIGCTGGRHRSVTLANEITKRLSATEYGVKAEHRDVEKG.

8-15 (GMSGAGKS) is a binding site for ATP. Residue 59 to 62 (DIRS) participates in GTP binding.

Belongs to the RapZ-like family.

In terms of biological role, displays ATPase and GTPase activities. The protein is Nucleotide-binding protein Cphy_0331 of Lachnoclostridium phytofermentans (strain ATCC 700394 / DSM 18823 / ISDg) (Clostridium phytofermentans).